A 193-amino-acid polypeptide reads, in one-letter code: CASP-like protein 1D1 (193 aa).

Residues 1-24 (MGYETKSTLDTERSTAPGTGTTTK) form a disordered region. Topologically, residues 1–30 (MGYETKSTLDTERSTAPGTGTTTKSCSMTQ) are cytoplasmic. Residues 14-24 (STAPGTGTTTK) show a composition bias toward polar residues. A helical transmembrane segment spans residues 31–51 (VVLRFVLFAATLTSIVVMVTS). At 52–76 (KQTKNIFLPGTPIRIPAAEFTNSPA) the chain is on the extracellular side. Residues 77-97 (LIYFVVALSVACFYSIVSTFV) form a helical membrane-spanning segment. Residues 98 to 108 (TVSAFKKHSCS) lie on the Cytoplasmic side of the membrane. Residues 109–129 (AVLLLNLAIMDAVMVGIVASA) traverse the membrane as a helical segment. Over 130-162 (TGAGGGVAYLGLKGNKEVRWGKICHIYDKFCRH) the chain is Extracellular. The helical transmembrane segment at 163–183 (VGGAIAVSLFASVVLLLLSII) threads the bilayer. The Cytoplasmic portion of the chain corresponds to 184–193 (SVLSLYKKIR).

The protein belongs to the Casparian strip membrane proteins (CASP) family. In terms of assembly, homodimer and heterodimers.

It localises to the cell membrane. The chain is CASP-like protein 1D1 from Arabidopsis thaliana (Mouse-ear cress).